A 1393-amino-acid chain; its full sequence is Rab3 GTPase-activating protein non-catalytic subunit (1393 aa).

The disordered stretch occupies residues 36 to 67 (RDPSKSTDWEDDGWGAWEENEPQEPEEEGNTC). Ser-39 bears the Phosphoserine mark. The segment covering 44-64 (WEDDGWGAWEENEPQEPEEEG) has biased composition (acidic residues). Phosphoserine is present on Ser-450. Thr-901 is modified (phosphothreonine). Residues Ser-916 and Ser-978 each carry the phosphoserine modification.

Belongs to the Rab3-GAP regulatory subunit family. As to quaternary structure, the Rab3 GTPase-activating complex is a heterodimer composed of RAB3GAP1 and RAB3GAP2. The Rab3 GTPase-activating complex interacts with DMXL2. Interacts with LMAN1. As to expression, ubiquitous.

It localises to the cytoplasm. The protein localises to the endoplasmic reticulum. Its function is as follows. Regulatory subunit of the Rab3 GTPase-activating (Rab3GAP) complex composed of RAB3GAP1 and RAB3GAP2, which has GTPase-activating protein (GAP) activity towards various Rab3 subfamily members (RAB3A, RAB3B, RAB3C and RAB3D), RAB5A and RAB43, and guanine nucleotide exchange factor (GEF) activity towards RAB18. As part of the Rab3GAP complex, acts as a GAP for Rab3 proteins by converting active RAB3-GTP to the inactive form RAB3-GDP. Rab3 proteins are involved in regulated exocytosis of neurotransmitters and hormones. The Rab3GAP complex acts as a GEF for RAB18 by promoting the conversion of inactive RAB18-GDP to the active form RAB18-GTP. Recruits and stabilizes RAB18 at the cis-Golgi membrane in human fibroblasts where RAB18 is most likely activated. Also involved in RAB18 recruitment at the endoplasmic reticulum (ER) membrane where it maintains proper ER structure. Required for normal eye and brain development. May participate in neurodevelopmental processes such as proliferation, migration and differentiation before synapse formation, and non-synaptic vesicular release of neurotransmitters. The sequence is that of Rab3 GTPase-activating protein non-catalytic subunit from Homo sapiens (Human).